The sequence spans 151 residues: 3-hydroxyacyl-[acyl-carrier-protein] dehydratase FabZ (151 aa).

His-54 is an active-site residue.

Belongs to the thioester dehydratase family. FabZ subfamily.

The protein localises to the cytoplasm. It catalyses the reaction a (3R)-hydroxyacyl-[ACP] = a (2E)-enoyl-[ACP] + H2O. Involved in unsaturated fatty acids biosynthesis. Catalyzes the dehydration of short chain beta-hydroxyacyl-ACPs and long chain saturated and unsaturated beta-hydroxyacyl-ACPs. The protein is 3-hydroxyacyl-[acyl-carrier-protein] dehydratase FabZ of Sodalis glossinidius (strain morsitans).